A 135-amino-acid chain; its full sequence is C-type lectin BPL (135 aa).

Disulfide bonds link Cys3-Cys14, Cys31-Cys131, Cys38-Cys133, and Cys106-Cys123. The region spanning 10 to 132 is the C-type lectin domain; it reads MNGLCYKIFN…CESKNAFLCQ (123 aa). Residues Gln96, Asp98, Glu104, and Asp120 each contribute to the Ca(2+) site. The Galactose-binding motif lies at 96 to 98; the sequence is QPD.

This sequence belongs to the true venom lectin family. In terms of assembly, homodimer; disulfide-linked. In terms of tissue distribution, expressed by the venom gland.

It is found in the secreted. Galactose-binding protein which recognizes specific carbohydrate structures and agglutinates a variety of animal cells by binding to cell-surface glycoproteins and glycolipids. Calcium-dependent lectin. Shows high hemagglutinating activity in the presence of human erythrocytes, which are agglutinated with a minimum hemagglutination concentration (MHC) of 2.5-0.35 ug/ml. Causes indirect nephrotoxicity. Causes reductions in perfusion pressures, renal vascular resistance, urinary flow, glomerular filtration rate, sodium, potassium and chloride tubular transport. Its effects may be caused by the release of inflammatory mediators. The sequence is that of C-type lectin BPL from Bothrops pirajai (Piraja's lancehead).